A 306-amino-acid chain; its full sequence is Putative NylC-analogous protein (306 aa).

It belongs to the peptidase S58 family.

The polypeptide is Putative NylC-analogous protein (Agromyces sp. (strain KY5R)).